A 716-amino-acid chain; its full sequence is Hepatocyte growth factor-like protein (716 aa).

The signal sequence occupies residues 1 to 18; that stretch reads MGWLPLLLLLVQCSRALG. One can recognise a PAN domain in the interval 19–105; that stretch reads QRSPLNDFQL…SLCHLFQKKD (87 aa). 20 disulfides stabilise this stretch: Cys56–Cys78, Cys60–Cys66, Cys110–Cys186, Cys131–Cys169, Cys157–Cys181, Cys191–Cys268, Cys194–Cys333, Cys212–Cys251, Cys240–Cys263, Cys292–Cys370, Cys313–Cys352, Cys341–Cys364, Cys379–Cys457, Cys400–Cys440, Cys428–Cys452, Cys477–Cys593, Cys512–Cys528, Cys607–Cys672, Cys637–Cys651, and Cys662–Cys690. N-linked (GlcNAc...) asparagine glycosylation occurs at Asn72. Kringle domains are found at residues 110 to 186, 191 to 268, 292 to 370, and 379 to 457; these read CIMD…IKTC, CVLC…LPSC, CFRG…IPRC, and CYHG…LQRC. Asn173 is a glycosylation site (N-linked (GlcNAc...) asparagine). Asn305 is a glycosylation site (N-linked (GlcNAc...) asparagine). The 226-residue stretch at 489 to 714 folds into the Peptidase S1 domain; it reads VVGGHPGNSP…FVDWINKVMQ (226 aa). Residue Asn620 is glycosylated (N-linked (GlcNAc...) asparagine).

Belongs to the peptidase S1 family. Plasminogen subfamily. Dimer of an alpha chain and a beta chain linked by a disulfide bond. Interacts (via beta chain) with MST1R (via SEMA domain). In terms of processing, cleaved after Arg-488, probably by HPN/Hepsin, to yield the active form consisting of two disulfide-linked chains. In terms of tissue distribution, liver. Lower levels in lung, placenta and adrenal.

It is found in the secreted. This Mus musculus (Mouse) protein is Hepatocyte growth factor-like protein (Mst1).